The primary structure comprises 91 residues: Large ribosomal subunit protein eL34 (91 aa).

Positions 48 to 69 are disordered; that stretch reads RGRPVEMRKLPKTKKRPERPMP.

This sequence belongs to the eukaryotic ribosomal protein eL34 family.

The protein is Large ribosomal subunit protein eL34 (rpl34e) of Pyrococcus horikoshii (strain ATCC 700860 / DSM 12428 / JCM 9974 / NBRC 100139 / OT-3).